The sequence spans 876 residues: Valine--tRNA ligase (876 aa).

The short motif at 43–53 (PNVTGVLHMGH) is the 'HIGH' region element. The 'KMSKS' region motif lies at 533–537 (KMSKS). K536 lines the ATP pocket. Residues 804 to 876 (GALIDVEEEI…DSLNQLQSTK (73 aa)) adopt a coiled-coil conformation.

The protein belongs to the class-I aminoacyl-tRNA synthetase family. ValS type 1 subfamily. Monomer.

The protein localises to the cytoplasm. The enzyme catalyses tRNA(Val) + L-valine + ATP = L-valyl-tRNA(Val) + AMP + diphosphate. Functionally, catalyzes the attachment of valine to tRNA(Val). As ValRS can inadvertently accommodate and process structurally similar amino acids such as threonine, to avoid such errors, it has a 'posttransfer' editing activity that hydrolyzes mischarged Thr-tRNA(Val) in a tRNA-dependent manner. This chain is Valine--tRNA ligase, found in Porphyromonas gingivalis (strain ATCC 33277 / DSM 20709 / CIP 103683 / JCM 12257 / NCTC 11834 / 2561).